The chain runs to 194 residues: MKEWIVATKNKGKVAEFEAILGKRGFSVKSLLDYPAIEDIEETGSTFNENATIKAEAIAERFQRPVLADDSGLIIDALDGRPGIFSARYAGEEKDDQKNIEKVLRELQDIPWKARTARFHCSIALARPQAETIVFEGTCEGYITTEPKGTGGFGYDPIFYVPSHDKTMAELTQEEKNKLSHRYHALKQLDKWLD.

8–13 (TKNKGK) is a binding site for substrate. Residues glutamate 41 and aspartate 70 each contribute to the Mg(2+) site. Aspartate 70 acts as the Proton acceptor in catalysis. Substrate contacts are provided by residues serine 71, 153 to 156 (FGYD), lysine 176, and 181 to 182 (HR).

It belongs to the HAM1 NTPase family. In terms of assembly, homodimer. It depends on Mg(2+) as a cofactor.

It catalyses the reaction XTP + H2O = XMP + diphosphate + H(+). It carries out the reaction dITP + H2O = dIMP + diphosphate + H(+). The catalysed reaction is ITP + H2O = IMP + diphosphate + H(+). Its function is as follows. Pyrophosphatase that catalyzes the hydrolysis of nucleoside triphosphates to their monophosphate derivatives, with a high preference for the non-canonical purine nucleotides XTP (xanthosine triphosphate), dITP (deoxyinosine triphosphate) and ITP. Seems to function as a house-cleaning enzyme that removes non-canonical purine nucleotides from the nucleotide pool, thus preventing their incorporation into DNA/RNA and avoiding chromosomal lesions. This Halalkalibacterium halodurans (strain ATCC BAA-125 / DSM 18197 / FERM 7344 / JCM 9153 / C-125) (Bacillus halodurans) protein is dITP/XTP pyrophosphatase.